We begin with the raw amino-acid sequence, 449 residues long: ATP-dependent protease ATPase subunit HslU (449 aa).

ATP contacts are provided by residues isoleucine 18, glycine 60 to glutamate 65, aspartate 261, glutamate 327, and arginine 399.

Belongs to the ClpX chaperone family. HslU subfamily. As to quaternary structure, a double ring-shaped homohexamer of HslV is capped on each side by a ring-shaped HslU homohexamer. The assembly of the HslU/HslV complex is dependent on binding of ATP.

The protein localises to the cytoplasm. In terms of biological role, ATPase subunit of a proteasome-like degradation complex; this subunit has chaperone activity. The binding of ATP and its subsequent hydrolysis by HslU are essential for unfolding of protein substrates subsequently hydrolyzed by HslV. HslU recognizes the N-terminal part of its protein substrates and unfolds these before they are guided to HslV for hydrolysis. The protein is ATP-dependent protease ATPase subunit HslU of Oleidesulfovibrio alaskensis (strain ATCC BAA-1058 / DSM 17464 / G20) (Desulfovibrio alaskensis).